We begin with the raw amino-acid sequence, 120 residues long: Dihydroneopterin aldolase (120 aa).

Substrate is bound by residues Glu-21, Tyr-53, and 72 to 73; that span reads VE. Residue Lys-99 is the Proton donor/acceptor of the active site.

It belongs to the DHNA family.

The catalysed reaction is 7,8-dihydroneopterin = 6-hydroxymethyl-7,8-dihydropterin + glycolaldehyde. Its pathway is cofactor biosynthesis; tetrahydrofolate biosynthesis; 2-amino-4-hydroxy-6-hydroxymethyl-7,8-dihydropteridine diphosphate from 7,8-dihydroneopterin triphosphate: step 3/4. In terms of biological role, catalyzes the conversion of 7,8-dihydroneopterin to 6-hydroxymethyl-7,8-dihydropterin. In Bacillus subtilis (strain 168), this protein is Dihydroneopterin aldolase (folB).